The sequence spans 403 residues: Arginine biosynthesis bifunctional protein ArgJ (403 aa).

T151, K177, T188, E275, N398, and S403 together coordinate substrate. T188 (nucleophile) is an active-site residue.

Belongs to the ArgJ family. In terms of assembly, heterotetramer of two alpha and two beta chains.

The protein localises to the cytoplasm. It catalyses the reaction N(2)-acetyl-L-ornithine + L-glutamate = N-acetyl-L-glutamate + L-ornithine. The enzyme catalyses L-glutamate + acetyl-CoA = N-acetyl-L-glutamate + CoA + H(+). The protein operates within amino-acid biosynthesis; L-arginine biosynthesis; L-ornithine and N-acetyl-L-glutamate from L-glutamate and N(2)-acetyl-L-ornithine (cyclic): step 1/1. It functions in the pathway amino-acid biosynthesis; L-arginine biosynthesis; N(2)-acetyl-L-ornithine from L-glutamate: step 1/4. In terms of biological role, catalyzes two activities which are involved in the cyclic version of arginine biosynthesis: the synthesis of N-acetylglutamate from glutamate and acetyl-CoA as the acetyl donor, and of ornithine by transacetylation between N(2)-acetylornithine and glutamate. The chain is Arginine biosynthesis bifunctional protein ArgJ from Caulobacter vibrioides (strain ATCC 19089 / CIP 103742 / CB 15) (Caulobacter crescentus).